The primary structure comprises 246 residues: DNA repair protein RecO (246 aa).

The protein belongs to the RecO family.

Its function is as follows. Involved in DNA repair and RecF pathway recombination. This is DNA repair protein RecO from Methylobacterium nodulans (strain LMG 21967 / CNCM I-2342 / ORS 2060).